Reading from the N-terminus, the 160-residue chain is Phosphopantetheine adenylyltransferase (160 aa).

Substrate is bound at residue Ser-8. Residues Ser-8 to Phe-9 and His-16 each bind ATP. Residues Lys-40, Leu-73, and Lys-87 each coordinate substrate. Residues Gly-88–Arg-90, Glu-98, and Tyr-122–Thr-128 contribute to the ATP site.

Belongs to the bacterial CoaD family. In terms of assembly, homohexamer. Mg(2+) is required as a cofactor.

The protein localises to the cytoplasm. The catalysed reaction is (R)-4'-phosphopantetheine + ATP + H(+) = 3'-dephospho-CoA + diphosphate. Its pathway is cofactor biosynthesis; coenzyme A biosynthesis; CoA from (R)-pantothenate: step 4/5. Its function is as follows. Reversibly transfers an adenylyl group from ATP to 4'-phosphopantetheine, yielding dephospho-CoA (dPCoA) and pyrophosphate. The chain is Phosphopantetheine adenylyltransferase from Corynebacterium glutamicum (strain R).